The sequence spans 478 residues: Calcitonin receptor (478 aa).

Positions 1–22 are cleaved as a signal peptide; that stretch reads MRFTFTRQFLAFFILISNPASI. The Extracellular segment spans residues 23–146; sequence LPRSENLTFP…FTPEKLQNAY (124 aa). N-linked (GlcNAc...) asparagine glycosylation is found at Asn-28, Asn-73, Asn-125, and Asn-130. Cystine bridges form between Cys-55–Cys-81, Cys-72–Cys-112, and Cys-95–Cys-134. The chain crosses the membrane as a helical span at residues 147–169; sequence VLYYLAIVGHSMSIITLVVSLGI. Residues 170 to 181 are Cytoplasmic-facing; that stretch reads FVYFRSLGCQRV. The helical transmembrane segment at 182 to 202 threads the bilayer; it reads TLHKNMFLTYILNSMIIIIHL. Over 203 to 219 the chain is Extracellular; sequence VEVVPNGELVRKDPVSC. An intrachain disulfide couples Cys-219 to Cys-289. A helical membrane pass occupies residues 220 to 242; that stretch reads KILHFFHQYMMACNYFWMLCEGI. Topologically, residues 243–259 are cytoplasmic; sequence YLHTLIVVSVFNEAKHL. Residues 260-280 traverse the membrane as a helical segment; it reads RWYYLLGWGFPLVPTTIHAIT. Residues 281–296 lie on the Extracellular side of the membrane; the sequence is RALYFNDNCWISVDTH. A helical transmembrane segment spans residues 297-320; the sequence is LLYIIHGPVMVALVVNFFFLLNIV. At 321–340 the chain is on the cytoplasmic side; that stretch reads RVLVTKMRETHEAESYMYLK. The chain crosses the membrane as a helical span at residues 341–359; that stretch reads AVKATMILVPLLGIQFVVF. Over 360 to 367 the chain is Extracellular; that stretch reads PWRPSNKV. Residues 368–394 form a helical membrane-spanning segment; the sequence is LGKIYDYFMHSLIHFQGFFVATIYCFC. Residues 395 to 478 are Cytoplasmic-facing; sequence NNEVQTTLKR…LNIIEKESSA (84 aa).

This sequence belongs to the G-protein coupled receptor 2 family. As to quaternary structure, heterodimer of CALCR and RAMP1, RAMP2 or RAMP3; the receptor complexes function as AMYR1, AMYR2 and AMYR3 receptors, respectively, and respond to amylin/IAPP, calcitonin/CT and CGRP1 ligands. Interacts with GPRASP2.

The protein localises to the cell membrane. In terms of biological role, g protein-coupled receptor activated by ligand peptides amylin (IAPP), calcitonin (CT/CALCA) and calcitonin gene-related peptide type 1 (CGRP1/CALCA). CALCR interacts with receptor-activity-modifying proteins RAMP1, 2 and 3 to form receptor complexes AMYR1, 2 and 3, respectively. IAPP, CT and CGRP1 activate CALCR and AMYRs with distinct modes of receptor activation resulting in specific phenotypes. Ligand binding causes a conformation change that triggers signaling via guanine nucleotide-binding proteins (G proteins) and modulates the activity of downstream effectors. Activates cAMP-dependent pathway. In Cavia porcellus (Guinea pig), this protein is Calcitonin receptor.